A 213-amino-acid chain; its full sequence is A-type ATP synthase subunit D (213 aa).

Belongs to the V-ATPase D subunit family. Has multiple subunits with at least A(3), B(3), C, D, E, F, H, I and proteolipid K(x).

Its subcellular location is the cell membrane. In terms of biological role, component of the A-type ATP synthase that produces ATP from ADP in the presence of a proton gradient across the membrane. The sequence is that of A-type ATP synthase subunit D from Thermoplasma acidophilum (strain ATCC 25905 / DSM 1728 / JCM 9062 / NBRC 15155 / AMRC-C165).